The primary structure comprises 150 residues: 3-dehydroquinate dehydratase (150 aa).

The active-site Proton acceptor is Tyr-26. Positions 77, 83, and 90 each coordinate substrate. The Proton donor role is filled by His-103. Residues 104–105 (LS) and Arg-114 contribute to the substrate site.

Belongs to the type-II 3-dehydroquinase family. As to quaternary structure, homododecamer.

It catalyses the reaction 3-dehydroquinate = 3-dehydroshikimate + H2O. The protein operates within metabolic intermediate biosynthesis; chorismate biosynthesis; chorismate from D-erythrose 4-phosphate and phosphoenolpyruvate: step 3/7. Its function is as follows. Catalyzes a trans-dehydration via an enolate intermediate. The sequence is that of 3-dehydroquinate dehydratase from Klebsiella pneumoniae (strain 342).